A 304-amino-acid chain; its full sequence is tRNA dimethylallyltransferase (304 aa).

13–20 (GPTAAGKT) is a binding site for ATP. 15-20 (TAAGKT) lines the substrate pocket. The interval 38 to 41 (DSRQ) is interaction with substrate tRNA.

The protein belongs to the IPP transferase family. Monomer. Mg(2+) is required as a cofactor.

It catalyses the reaction adenosine(37) in tRNA + dimethylallyl diphosphate = N(6)-dimethylallyladenosine(37) in tRNA + diphosphate. In terms of biological role, catalyzes the transfer of a dimethylallyl group onto the adenine at position 37 in tRNAs that read codons beginning with uridine, leading to the formation of N6-(dimethylallyl)adenosine (i(6)A). The protein is tRNA dimethylallyltransferase of Cytophaga hutchinsonii (strain ATCC 33406 / DSM 1761 / CIP 103989 / NBRC 15051 / NCIMB 9469 / D465).